We begin with the raw amino-acid sequence, 211 residues long: Thymidylate kinase (211 aa).

10–17 (GVEGCGKT) provides a ligand contact to ATP.

Belongs to the thymidylate kinase family.

The catalysed reaction is dTMP + ATP = dTDP + ADP. In terms of biological role, phosphorylation of dTMP to form dTDP in both de novo and salvage pathways of dTTP synthesis. This is Thymidylate kinase from Nostoc sp. (strain PCC 7120 / SAG 25.82 / UTEX 2576).